The sequence spans 101 residues: Protein RALF-like 14 (101 aa).

The signal sequence occupies residues 1-21; sequence MKLLIFAVIISVVLFPVLVSS. The propeptide at 22–56 is removed in mature form; it reads RTIKCDQLSGKCINGEEKEIMNMRLGLDVSSRRIL. C90 and C96 are oxidised to a cystine.

The protein belongs to the plant rapid alkalinization factor (RALF) family. Proteolytically cleaved, probably by S1P, a subtilisin-like serine protease (subtilase).

Its subcellular location is the secreted. In terms of biological role, cell signaling peptide that may regulate plant stress, growth, and development. Mediates a rapid alkalinization of extracellular space by mediating a transient increase in the cytoplasmic Ca(2+) concentration leading to a calcium-dependent signaling events through a cell surface receptor and a concomitant activation of some intracellular mitogen-activated protein kinases. The chain is Protein RALF-like 14 (RALFL14) from Arabidopsis thaliana (Mouse-ear cress).